The chain runs to 194 residues: Molybdenum cofactor guanylyltransferase (194 aa).

Residues 12-14 (LAG), lysine 25, asparagine 53, aspartate 70, and aspartate 100 each bind GTP. Residue aspartate 100 coordinates Mg(2+).

It belongs to the MobA family. Monomer. Mg(2+) is required as a cofactor.

The protein localises to the cytoplasm. It carries out the reaction Mo-molybdopterin + GTP + H(+) = Mo-molybdopterin guanine dinucleotide + diphosphate. Functionally, transfers a GMP moiety from GTP to Mo-molybdopterin (Mo-MPT) cofactor (Moco or molybdenum cofactor) to form Mo-molybdopterin guanine dinucleotide (Mo-MGD) cofactor. The sequence is that of Molybdenum cofactor guanylyltransferase from Aliivibrio salmonicida (strain LFI1238) (Vibrio salmonicida (strain LFI1238)).